The following is a 272-amino-acid chain: Type III pantothenate kinase (272 aa).

Position 6–13 (6–13 (DVRNTHTV)) interacts with ATP. 109–112 (GADR) contributes to the substrate binding site. D111 acts as the Proton acceptor in catalysis. Position 131 (D131) interacts with K(+). Position 134 (S134) interacts with ATP. A substrate-binding site is contributed by T186.

This sequence belongs to the type III pantothenate kinase family. As to quaternary structure, homodimer. It depends on NH4(+) as a cofactor. The cofactor is K(+).

The protein localises to the cytoplasm. It carries out the reaction (R)-pantothenate + ATP = (R)-4'-phosphopantothenate + ADP + H(+). The protein operates within cofactor biosynthesis; coenzyme A biosynthesis; CoA from (R)-pantothenate: step 1/5. Its function is as follows. Catalyzes the phosphorylation of pantothenate (Pan), the first step in CoA biosynthesis. The protein is Type III pantothenate kinase of Mycobacterium bovis (strain BCG / Pasteur 1173P2).